Reading from the N-terminus, the 151-residue chain is 3-dehydroquinate dehydratase (151 aa).

The active-site Proton acceptor is Tyr-24. Asn-76, His-82, and Asp-89 together coordinate substrate. His-102 (proton donor) is an active-site residue. Substrate contacts are provided by residues 103-104 (LS) and Arg-113.

It belongs to the type-II 3-dehydroquinase family. Homododecamer.

The enzyme catalyses 3-dehydroquinate = 3-dehydroshikimate + H2O. Its pathway is metabolic intermediate biosynthesis; chorismate biosynthesis; chorismate from D-erythrose 4-phosphate and phosphoenolpyruvate: step 3/7. Its function is as follows. Catalyzes a trans-dehydration via an enolate intermediate. This is 3-dehydroquinate dehydratase from Acinetobacter baumannii (strain AB307-0294).